Consider the following 359-residue polypeptide: MFEQLNQPGLFGITNSNRDFTKKEAWGKNQFNNAFPIALACFMFSQNIKPIYIRLEKRNIEHNYFAVDQVFQINPLEAQAFFAFEHSYHPYTELIIGKTPAIDVVISNLQNSQIINAFEIKLTAIPDNTTANLPDNLQGCEIVIRPDTIVYLALSIAKVFQQNPLALLDILDPVCARIGDWEDATSIQPMIPLFCELLYTIFDRYQAVQIPILLQPIWKTQGKLSILHENCLDLFVWSNFALAKVFLDASIKPSEKSITRPERTTVWLIKMLYDFAQNGKIDYKRTLDRITFNLKNDKAFAASGMVTRKYMNSPELQNPRIKRHSIKHIIINGGQRYLSPERRLDSAIVSTPGLFEEIL.

The catalysed reaction is Endonucleolytic cleavage of DNA to give specific double-stranded fragments with terminal 5'-phosphates.. A P subtype restriction enzyme that recognizes the double-stranded sequence 5'-GRCGYC-3' and cleaves after R-2. The protein is Type II restriction enzyme HgiDI of Herpetosiphon aurantiacus (Herpetosiphon giganteus).